The primary structure comprises 355 residues: UDP-N-acetylglucosamine--N-acetylmuramyl-(pentapeptide) pyrophosphoryl-undecaprenol N-acetylglucosamine transferase (355 aa).

UDP-N-acetyl-alpha-D-glucosamine is bound by residues 14–16, asparagine 126, arginine 162, serine 190, isoleucine 244, and glutamine 289; that span reads TGG.

Belongs to the glycosyltransferase 28 family. MurG subfamily.

It localises to the cell inner membrane. The enzyme catalyses di-trans,octa-cis-undecaprenyl diphospho-N-acetyl-alpha-D-muramoyl-L-alanyl-D-glutamyl-meso-2,6-diaminopimeloyl-D-alanyl-D-alanine + UDP-N-acetyl-alpha-D-glucosamine = di-trans,octa-cis-undecaprenyl diphospho-[N-acetyl-alpha-D-glucosaminyl-(1-&gt;4)]-N-acetyl-alpha-D-muramoyl-L-alanyl-D-glutamyl-meso-2,6-diaminopimeloyl-D-alanyl-D-alanine + UDP + H(+). Its pathway is cell wall biogenesis; peptidoglycan biosynthesis. Functionally, cell wall formation. Catalyzes the transfer of a GlcNAc subunit on undecaprenyl-pyrophosphoryl-MurNAc-pentapeptide (lipid intermediate I) to form undecaprenyl-pyrophosphoryl-MurNAc-(pentapeptide)GlcNAc (lipid intermediate II). The sequence is that of UDP-N-acetylglucosamine--N-acetylmuramyl-(pentapeptide) pyrophosphoryl-undecaprenol N-acetylglucosamine transferase from Paracidovorax citrulli (strain AAC00-1) (Acidovorax citrulli).